The following is a 79-amino-acid chain: WAP four-disulfide core domain protein 10A (79 aa).

Residues 1-21 (MAPQTLLPVLVLCVLLLQAQG) form the signal peptide. Residues 34–79 (LSPEIKVCQQQPKLYLCKHLCESHRDCQANNICCSTYCGNVCMSIL) form the WAP domain. Disulfide bonds link Cys-41-Cys-67, Cys-50-Cys-71, Cys-54-Cys-66, and Cys-60-Cys-75.

The protein resides in the secreted. The sequence is that of WAP four-disulfide core domain protein 10A (WFDC10A) from Homo sapiens (Human).